Reading from the N-terminus, the 1463-residue chain is Secretory phospholipase A2 receptor (1463 aa).

Positions methionine 1–alanine 20 are cleaved as a signal peptide. Residues glutamate 21–lysine 1392 are Extracellular-facing. A Ricin B-type lectin domain is found at lysine 38 to tryptophan 115. The N-linked (GlcNAc...) asparagine glycan is linked to asparagine 93. The Fibronectin type-II domain occupies alanine 173–aspartate 221. Intrachain disulfides connect cysteine 178-cysteine 204, cysteine 192-cysteine 219, cysteine 260-cysteine 354, cysteine 330-cysteine 346, cysteine 406-cysteine 501, cysteine 478-cysteine 493, cysteine 617-cysteine 634, cysteine 699-cysteine 796, cysteine 774-cysteine 788, cysteine 840-cysteine 938, cysteine 915-cysteine 930, cysteine 992-cysteine 1096, cysteine 1068-cysteine 1088, cysteine 1209-cysteine 1223, cysteine 1280-cysteine 1377, and cysteine 1354-cysteine 1369. C-type lectin domains lie at cysteine 229 to valine 353, tyrosine 357 to leucine 500, threonine 504 to serine 641, proline 646 to isoleucine 795, proline 799 to isoleucine 937, lysine 941 to valine 1095, methionine 1099 to alanine 1230, and proline 1235 to isoleucine 1376. A glycan (N-linked (GlcNAc...) asparagine) is linked at asparagine 454. An N-linked (GlcNAc...) asparagine glycan is attached at asparagine 1057. Residues glycine 1393–tyrosine 1421 traverse the membrane as a helical segment. The Cytoplasmic portion of the chain corresponds to lysine 1422–glutamine 1463. The Endocytosis signal motif lies at asparagine 1436 to alanine 1442.

In terms of assembly, interacts with sPLA2-IB/PLA2G1B; this interaction mediates intracellular signaling as well as clearance of extracellular sPLA2-IB/PLA2G1B via endocytotic pathway. Interacts with sPLA2-X/PLA2G10; this interaction mediates sPLA2-X/PLA2G10 clearance and inactivation. Post-translationally, the secretory phospholipase A2 receptor form may be produced by the action of metalloproteinases. It contains all extracellular domains and only lacks transmembrane and cytosolic regions. It is however unclear whether this form is produced by proteolytic cleavage as suggested by some experiments, or by alternative splicing.

It is found in the cell membrane. The protein resides in the secreted. In terms of biological role, receptor for secretory phospholipase A2 (sPLA2). Also able to bind to snake PA2-like toxins. Although its precise function remains unclear, binding of sPLA2 to its receptor participates in both positive and negative regulation of sPLA2 functions as well as clearance of sPLA2. Binding of sPLA2-IB/PLA2G1B induces various effects depending on the cell type, such as activation of the mitogen-activated protein kinase (MAPK) cascade to induce cell proliferation, the production of lipid mediators, selective release of arachidonic acid in bone marrow-derived mast cells. In neutrophils, binding of sPLA2-IB/PLA2G1B can activate p38 MAPK to stimulate elastase release and cell adhesion. May be involved in responses in pro-inflammatory cytokine productions during endotoxic shock. Also has endocytic properties and rapidly internalizes sPLA2 ligands, which is particularly important for the clearance of extracellular sPLA2s to protect their potent enzymatic activities. The soluble secretory phospholipase A2 receptor form is circulating and acts as a negative regulator of sPLA2 functions by blocking the biological functions of sPLA2-IB/PLA2G1B and sPLA2-X/PLA2G10. The chain is Secretory phospholipase A2 receptor (PLA2R1) from Bos taurus (Bovine).